The chain runs to 343 residues: N-acetyl-gamma-glutamyl-phosphate reductase (343 aa).

Cys-152 is an active-site residue.

Belongs to the NAGSA dehydrogenase family. Type 1 subfamily.

It is found in the cytoplasm. It carries out the reaction N-acetyl-L-glutamate 5-semialdehyde + phosphate + NADP(+) = N-acetyl-L-glutamyl 5-phosphate + NADPH + H(+). Its pathway is amino-acid biosynthesis; L-arginine biosynthesis; N(2)-acetyl-L-ornithine from L-glutamate: step 3/4. In terms of biological role, catalyzes the NADPH-dependent reduction of N-acetyl-5-glutamyl phosphate to yield N-acetyl-L-glutamate 5-semialdehyde. The sequence is that of N-acetyl-gamma-glutamyl-phosphate reductase from Methanopyrus kandleri (strain AV19 / DSM 6324 / JCM 9639 / NBRC 100938).